We begin with the raw amino-acid sequence, 461 residues long: Nicotianamine aminotransferase A (461 aa).

The disordered stretch occupies residues 1–29 (MVHQSNGHGEAAAAAANGKSNGHAAAANG). Positions 11–29 (AAAAAANGKSNGHAAAANG) are enriched in low complexity. Lys289 bears the N6-(pyridoxal phosphate)lysine mark.

The protein belongs to the class-I pyridoxal-phosphate-dependent aminotransferase family. Requires pyridoxal 5'-phosphate as cofactor. Expressed in roots, but not in leaves.

It catalyses the reaction nicotianamine + 2-oxoglutarate = 3''-deamino-3''-oxonicotianamine + L-glutamate. In terms of biological role, involved in biosynthesis of mugineic acid family phytosiderophores. The chain is Nicotianamine aminotransferase A from Hordeum vulgare (Barley).